Consider the following 395-residue polypeptide: Elongation factor Tu (395 aa).

The 195-residue stretch at 10–204 folds into the tr-type G domain; the sequence is KPHVNIGTIG…IVDEYIPTPE (195 aa). Residues 19–26 form a G1 region; that stretch reads GHVDHGKT. 19–26 contributes to the GTP binding site; the sequence is GHVDHGKT. Thr-26 lines the Mg(2+) pocket. The tract at residues 60-64 is G2; sequence GITIN. The interval 81-84 is G3; that stretch reads DAPG. GTP-binding positions include 81-85 and 136-139; these read DAPGH and NKAD. Residues 136–139 form a G4 region; it reads NKAD. The G5 stretch occupies residues 174–176; the sequence is SAL.

This sequence belongs to the TRAFAC class translation factor GTPase superfamily. Classic translation factor GTPase family. EF-Tu/EF-1A subfamily. In terms of assembly, monomer.

The protein resides in the cytoplasm. The catalysed reaction is GTP + H2O = GDP + phosphate + H(+). Its function is as follows. GTP hydrolase that promotes the GTP-dependent binding of aminoacyl-tRNA to the A-site of ribosomes during protein biosynthesis. In Lactococcus lactis subsp. lactis (strain IL1403) (Streptococcus lactis), this protein is Elongation factor Tu.